Reading from the N-terminus, the 238-residue chain is 2-C-methyl-D-erythritol 4-phosphate cytidylyltransferase (238 aa).

This sequence belongs to the IspD/TarI cytidylyltransferase family. IspD subfamily.

The enzyme catalyses 2-C-methyl-D-erythritol 4-phosphate + CTP + H(+) = 4-CDP-2-C-methyl-D-erythritol + diphosphate. Its pathway is isoprenoid biosynthesis; isopentenyl diphosphate biosynthesis via DXP pathway; isopentenyl diphosphate from 1-deoxy-D-xylulose 5-phosphate: step 2/6. Functionally, catalyzes the formation of 4-diphosphocytidyl-2-C-methyl-D-erythritol from CTP and 2-C-methyl-D-erythritol 4-phosphate (MEP). This chain is 2-C-methyl-D-erythritol 4-phosphate cytidylyltransferase, found in Leptospira interrogans serogroup Icterohaemorrhagiae serovar copenhageni (strain Fiocruz L1-130).